A 239-amino-acid chain; its full sequence is LexA repressor (239 aa).

The H-T-H motif DNA-binding region spans 27–47; that stretch reads FDEMKDALDLASKSGIHRLIT. Catalysis depends on for autocatalytic cleavage activity residues Ser-159 and Lys-197.

Belongs to the peptidase S24 family. In terms of assembly, homodimer.

It catalyses the reaction Hydrolysis of Ala-|-Gly bond in repressor LexA.. Functionally, represses a number of genes involved in the response to DNA damage (SOS response), including recA and lexA. In the presence of single-stranded DNA, RecA interacts with LexA causing an autocatalytic cleavage which disrupts the DNA-binding part of LexA, leading to derepression of the SOS regulon and eventually DNA repair. The sequence is that of LexA repressor from Rhizobium radiobacter (Agrobacterium tumefaciens).